A 468-amino-acid polypeptide reads, in one-letter code: uncharacterized protein (468 aa).

Residues 1-69 (MKKYQQLAEQ…PQSGYYVAPQ (69 aa)) form the HTH gntR-type domain. The residue at position 312 (Lys-312) is an N6-(pyridoxal phosphate)lysine.

In the C-terminal section; belongs to the class-I pyridoxal-phosphate-dependent aminotransferase family.

This is an uncharacterized protein from Escherichia coli (strain K12).